The following is a 448-amino-acid chain: MSHRYIPLTEQDKNEMLNSIGAKSISELFDDIPTDILLKRNLNIAESEAETILLRRLNRLAAKNTTKETHATFLGAGVYDHYTPAVVDAMISRSEFYTAYTPYQPEISQGELQAIFEFQTLICELTDMDVANSSMYDGMTSFAEACILALSHTKKNKIVVSSGLHYQALQILHTYAKTRDEFEIIEVDLKGTITDLEKLEQLIDDNTAAVAVQYPNFYGSIEDLEQINNYIKDKKALFIVYANPLSLGLLTPPGTFGADIVVGDTQPFGIPTQFGGPHCGYFATTKKLMRKVPGRLVGQTQDDEGNRGFVLTLQAREQHIRRDKATSNICSNQALNALASSIAMSALGKQGIYEIAVQNLKNANYAKNKFEEHGFEVLKAQSFNEFVVKFNQPIKNINLKLAEYGYIGGFDLGEVSDDFKNHMLVAVTELRSKDEIDDFVTKAGELND.

This sequence belongs to the GcvP family. N-terminal subunit subfamily. In terms of assembly, the glycine cleavage system is composed of four proteins: P, T, L and H. In this organism, the P 'protein' is a heterodimer of two subunits.

The enzyme catalyses N(6)-[(R)-lipoyl]-L-lysyl-[glycine-cleavage complex H protein] + glycine + H(+) = N(6)-[(R)-S(8)-aminomethyldihydrolipoyl]-L-lysyl-[glycine-cleavage complex H protein] + CO2. Functionally, the glycine cleavage system catalyzes the degradation of glycine. The P protein binds the alpha-amino group of glycine through its pyridoxal phosphate cofactor; CO(2) is released and the remaining methylamine moiety is then transferred to the lipoamide cofactor of the H protein. The sequence is that of Probable glycine dehydrogenase (decarboxylating) subunit 1 from Staphylococcus epidermidis (strain ATCC 35984 / DSM 28319 / BCRC 17069 / CCUG 31568 / BM 3577 / RP62A).